The primary structure comprises 258 residues: Acyl-[acyl-carrier-protein]--UDP-N-acetylglucosamine O-acyltransferase (258 aa).

The protein belongs to the transferase hexapeptide repeat family. LpxA subfamily. In terms of assembly, homotrimer.

It localises to the cytoplasm. The catalysed reaction is a (3R)-hydroxyacyl-[ACP] + UDP-N-acetyl-alpha-D-glucosamine = a UDP-3-O-[(3R)-3-hydroxyacyl]-N-acetyl-alpha-D-glucosamine + holo-[ACP]. It participates in glycolipid biosynthesis; lipid IV(A) biosynthesis; lipid IV(A) from (3R)-3-hydroxytetradecanoyl-[acyl-carrier-protein] and UDP-N-acetyl-alpha-D-glucosamine: step 1/6. In terms of biological role, involved in the biosynthesis of lipid A, a phosphorylated glycolipid that anchors the lipopolysaccharide to the outer membrane of the cell. The sequence is that of Acyl-[acyl-carrier-protein]--UDP-N-acetylglucosamine O-acyltransferase from Pseudomonas putida (strain W619).